The chain runs to 342 residues: Cell division protein ZipA (342 aa).

Residues 1–6 (MEDLQL) lie on the Periplasmic side of the membrane. A helical membrane pass occupies residues 7 to 27 (VLFILGAIAIVAVLVHGFWSI). Topologically, residues 28 to 342 (RRQQPKSLKD…DYLHRIRANA (315 aa)) are cytoplasmic. The tract at residues 33 to 57 (KSLKDSPMGNFYKQQADKESPPKRV) is disordered. Over residues 47–57 (QADKESPPKRV) the composition is skewed to basic and acidic residues.

The protein belongs to the ZipA family. As to quaternary structure, interacts with FtsZ via their C-terminal domains.

It is found in the cell inner membrane. Functionally, essential cell division protein that stabilizes the FtsZ protofilaments by cross-linking them and that serves as a cytoplasmic membrane anchor for the Z ring. Also required for the recruitment to the septal ring of downstream cell division proteins. The chain is Cell division protein ZipA from Shewanella sp. (strain W3-18-1).